Reading from the N-terminus, the 290-residue chain is MQQKFGGRLGHALSFLRHDGGHFAQFVWSRFQHDRLTVTAGYLAYVTLLSLVPMIAVVFGMMSAFPVFQTLKQAMEQFVYHNFVPTAGEMLKEYIDGFVANATNTTAVGIGALIVVALMLISAIDKNLNYIWRSTQGRPLAQAFAMYWMILTLGPVLIGGSIAISSYIFSLRLFGAESLFGIGYLLLRSLPFLFSVLTFLLVYTVVPNCKVRLVHAFIGALVAATLFELAKRGFAIYITNFPSYQAIYGALATIPVLFVWVYLSWLVVLLGAETTACLGEYEKPVSEELA.

6 helical membrane-spanning segments follow: residues 48-68 (LLSLVPMIAVVFGMMSAFPVF), 104-124 (NTTAVGIGALIVVALMLISAI), 144-164 (FAMYWMILTLGPVLIGGSIAI), 182-202 (IGYLLLRSLPFLFSVLTFLLV), 216-236 (AFIGALVAATLFELAKRGFAI), and 250-270 (ALATIPVLFVWVYLSWLVVLL).

It belongs to the UPF0761 family.

The protein localises to the cell inner membrane. The chain is UPF0761 membrane protein ASA_4118 from Aeromonas salmonicida (strain A449).